The following is a 315-amino-acid chain: MAKHTTVLLDEAVNGLGLKTDGIYVDGTFGRGGHSRHILGQLGAQGRLIAIDRDPRAIETGEALMKEDPRFTIIHGPFSGLAEYIKELGLAGQIDGVLLDLGVSSPQIDDADRGFSFMRDGPLDMRMDPTSGISAAQWLAKADVDDIGWVLKTFGEEKFAFRIARAIVADRTETPFLRTLQLAQLIERLCPKREKKKHPATRSFQAIRIYVNSELEEIHKVLDGALEILAIGGQLSVISFHSLEDRIVKRFIRKQEKGREYPPGLPLTEAQMQHGKTLKSLAKALKPSAEEINENTRARSSVLRVAQKIAEPESE.

S-adenosyl-L-methionine is bound by residues 32 to 34, aspartate 52, phenylalanine 78, aspartate 100, and glutamine 107; that span reads GGH.

Belongs to the methyltransferase superfamily. RsmH family.

It is found in the cytoplasm. It catalyses the reaction cytidine(1402) in 16S rRNA + S-adenosyl-L-methionine = N(4)-methylcytidine(1402) in 16S rRNA + S-adenosyl-L-homocysteine + H(+). Functionally, specifically methylates the N4 position of cytidine in position 1402 (C1402) of 16S rRNA. This chain is Ribosomal RNA small subunit methyltransferase H, found in Psychromonas ingrahamii (strain DSM 17664 / CCUG 51855 / 37).